The chain runs to 100 residues: Urease subunit gamma (100 aa).

This sequence belongs to the urease gamma subunit family. Heterotrimer of UreA (gamma), UreB (beta) and UreC (alpha) subunits. Three heterotrimers associate to form the active enzyme.

The protein localises to the cytoplasm. The catalysed reaction is urea + 2 H2O + H(+) = hydrogencarbonate + 2 NH4(+). The protein operates within nitrogen metabolism; urea degradation; CO(2) and NH(3) from urea (urease route): step 1/1. The sequence is that of Urease subunit gamma from Streptomyces coelicolor (strain ATCC BAA-471 / A3(2) / M145).